Reading from the N-terminus, the 109-residue chain is Period circadian protein (109 aa).

A disordered region spans residues 29 to 100; it reads ITAPVDVDPH…TGTSSGSVQL (72 aa). A compositionally biased stretch (low complexity) spans 69-97; sequence SGNFNSGSNLHIGSITNTSNTGTGTSSGS.

In terms of assembly, forms a heterodimer with timeless (TIM); the complex then translocates into the nucleus. In terms of processing, phosphorylated with a circadian rhythmicity, probably by the double-time protein (dbt). Phosphorylation could be implicated in the stability of per monomer and in the formation of heterodimer per-tim.

Its subcellular location is the nucleus. The protein resides in the cytoplasm. It is found in the perinuclear region. Functionally, essential for biological clock functions. Determines the period length of circadian and ultradian rhythms; an increase in PER dosage leads to shortened circadian rhythms and a decrease leads to lengthened circadian rhythms. Essential for the circadian rhythmicity of locomotor activity, eclosion behavior, and for the rhythmic component of the male courtship song that originates in the thoracic nervous system. The biological cycle depends on the rhythmic formation and nuclear localization of the TIM-PER complex. Light induces the degradation of TIM, which promotes elimination of PER. Nuclear activity of the heterodimer coordinatively regulates PER and TIM transcription through a negative feedback loop. Behaves as a negative element in circadian transcriptional loop. Does not appear to bind DNA, suggesting indirect transcriptional inhibition. The sequence is that of Period circadian protein (per) from Loxocera albiseta (Rust fly).